The chain runs to 451 residues: UPF0210 protein CLH_1879 (451 aa).

Belongs to the UPF0210 family. Homodimer.

This is UPF0210 protein CLH_1879 from Clostridium botulinum (strain Alaska E43 / Type E3).